A 248-amino-acid chain; its full sequence is NAD(P)H-quinone oxidoreductase subunit K (248 aa).

Cys66, Cys67, Cys131, and Cys162 together coordinate [4Fe-4S] cluster.

This sequence belongs to the complex I 20 kDa subunit family. NDH-1 can be composed of about 15 different subunits; different subcomplexes with different compositions have been identified which probably have different functions. It depends on [4Fe-4S] cluster as a cofactor.

The protein resides in the cellular thylakoid membrane. The catalysed reaction is a plastoquinone + NADH + (n+1) H(+)(in) = a plastoquinol + NAD(+) + n H(+)(out). It catalyses the reaction a plastoquinone + NADPH + (n+1) H(+)(in) = a plastoquinol + NADP(+) + n H(+)(out). In terms of biological role, NDH-1 shuttles electrons from an unknown electron donor, via FMN and iron-sulfur (Fe-S) centers, to quinones in the respiratory and/or the photosynthetic chain. The immediate electron acceptor for the enzyme in this species is believed to be plastoquinone. Couples the redox reaction to proton translocation, and thus conserves the redox energy in a proton gradient. Cyanobacterial NDH-1 also plays a role in inorganic carbon-concentration. The sequence is that of NAD(P)H-quinone oxidoreductase subunit K from Synechococcus sp. (strain WH7803).